The chain runs to 678 residues: Electrogenic aspartate/glutamate antiporter SLC25A12, mitochondrial (678 aa).

At A2 the chain carries N-acetylalanine. The regulatory N-terminal domain stretch occupies residues 2 to 294 (AVKVQTTKRG…TLADIERIAP (293 aa)). At 2 to 329 (AVKVQTTKRG…WLQIAESAYR (328 aa)) the chain is on the mitochondrial intermembrane side. Ca(2+) is bound by residues D65, T67, D69, L71, and E76. 4 consecutive EF-hand domains span residues 65-76 (DQTKDGLISYQE), 86-121 (APDSMFIVAFQLFDKSGNGEVTFENVKEIFGQTIIH), 125-155 (PFNWDCEFIRLHFGHNRKKHLNYTEFTQFLQ), and 157-192 (LQLEHARQAFALKDKSKSGMISGLDFSDIMVTIRSH). Positions 295 to 310 (LAEGALPYNLAELQRQ) are linker loop domain. The carrier domain stretch occupies residues 320 to 612 (WLQIAESAYR…RWFYIDFGGL (293 aa)). Solcar repeat units follow at residues 324–416 (AESA…VRDK), 424–508 (VPLP…CKLL), and 516–604 (VGGL…LQRW). The helical transmembrane segment at 330–347 (FTLGSVAGAVGATAVYPI) threads the bilayer. Topologically, residues 348 to 390 (DLVKTRMQNQRGSGSVVGELMYKNSFDCFKKVLRYEGFFGLYR) are mitochondrial matrix. The helical transmembrane segment at 391 to 410 (GLIPQLIGVAPEKAIKLTVN) threads the bilayer. At 411-433 (DFVRDKFTRRDGSVPLPAEVLAG) the chain is on the mitochondrial intermembrane side. Residues 434 to 447 (GCAGGSQVIFTNPL) form a helical membrane-spanning segment. The Mitochondrial matrix portion of the chain corresponds to 448–482 (EIVKIRLQVAGEITTGPRVSALNVLRDLGIFGLYK). The chain crosses the membrane as a helical span at residues 483 to 502 (GAKACFLRDIPFSAIYFPVY). Residues 503 to 521 (AHCKLLLADENGHVGGLNL) are Mitochondrial intermembrane-facing. A helical transmembrane segment spans residues 522-539 (LAAGAMAGVPAASLVTPA). Residues 540 to 578 (DVIKTRLQVAARAGQTTYSGVIDCFRKILREEGPSAFWK) lie on the Mitochondrial matrix side of the membrane. Residues 579–598 (GTAARVFRSSPQFGVTLVTY) form a helical membrane-spanning segment. The Mitochondrial intermembrane segment spans residues 599 to 678 (ELLQRWFYID…QPKAAVAATQ (80 aa)). The tract at residues 613-675 (KPAGSEPTPK…AVVQPKAAVA (63 aa)) is C-terminal domain.

It belongs to the mitochondrial carrier (TC 2.A.29) family. Homodimer (via N-terminus). In terms of tissue distribution, expressed predominantly in the heart and skeletal muscle, weakly in brain and kidney.

The protein resides in the mitochondrion inner membrane. It catalyses the reaction L-aspartate(in) + L-glutamate(out) + H(+)(out) = L-aspartate(out) + L-glutamate(in) + H(+)(in). The enzyme catalyses 3-sulfino-L-alanine(out) + L-glutamate(in) + H(+)(in) = 3-sulfino-L-alanine(in) + L-glutamate(out) + H(+)(out). The catalysed reaction is 3-sulfino-L-alanine(out) + L-aspartate(in) = 3-sulfino-L-alanine(in) + L-aspartate(out). Its activity is regulated as follows. Activated by calcium-binding in the mitochondrial intermembrane space. Inhibited by pyridoxal 5'-phosphate, bathophenathroline, mercurials, diethyl pyrocarbonate and N-ethylmaleimide. Mitochondrial electrogenic aspartate/glutamate antiporter that favors efflux of aspartate and entry of glutamate and proton within the mitochondria as part of the malate-aspartate shuttle. Also mediates the uptake of L-cysteinesulfinate (3-sulfino-L-alanine) by mitochondria in exchange of L-glutamate and proton. Can also exchange L-cysteinesulfinate with aspartate in their anionic form without any proton translocation. Lacks transport activity towards L-glutamine or gamma-aminobutyric acid (GABA). This Homo sapiens (Human) protein is Electrogenic aspartate/glutamate antiporter SLC25A12, mitochondrial.